Consider the following 522-residue polypeptide: Kelch domain-containing protein 4 (522 aa).

Basic residues predominate over residues 1 to 10 (MGKKGKKEKK). Residues 1-33 (MGKKGKKEKKGRGAEKTAAKMEKKVSKRSRKEE) form a disordered region. A compositionally biased stretch (basic and acidic residues) spans 11 to 24 (GRGAEKTAAKMEKK). Kelch repeat units lie at residues 77-129 (ELIL…VVPQ), 133-187 (QLWV…AWKR), 188-241 (QLIL…VTPQ), 243-289 (GIII…MNPS), and 308-361 (QTLF…RRGR). Disordered regions lie at residues 346 to 378 (QLKG…GAGT), 402 to 432 (LAAP…PCPR), and 481 to 522 (DPET…GAED). A phosphoserine mark is found at serine 413 and serine 418. The Kelch 6 repeat unit spans residues 443–494 (VLYVYGGMFEAGDRQVTLSDLHCLDLHRMEAWKALVEMDPETQEWLEETDSE).

The chain is Kelch domain-containing protein 4 (KLHDC4) from Pongo abelii (Sumatran orangutan).